The chain runs to 590 residues: Aspartate--tRNA ligase (590 aa).

E172 contributes to the L-aspartate binding site. The aspartate stretch occupies residues 196–199; the sequence is QLFK. L-aspartate is bound at residue R218. ATP contacts are provided by residues 218-220 and Q227; that span reads RDE. Position 449 (H449) interacts with L-aspartate. E483 contributes to the ATP binding site. Position 490 (R490) interacts with L-aspartate. 535-538 is an ATP binding site; the sequence is GLDR.

It belongs to the class-II aminoacyl-tRNA synthetase family. Type 1 subfamily. In terms of assembly, homodimer.

It localises to the cytoplasm. It catalyses the reaction tRNA(Asp) + L-aspartate + ATP = L-aspartyl-tRNA(Asp) + AMP + diphosphate. Functionally, catalyzes the attachment of L-aspartate to tRNA(Asp) in a two-step reaction: L-aspartate is first activated by ATP to form Asp-AMP and then transferred to the acceptor end of tRNA(Asp). This is Aspartate--tRNA ligase from Mannheimia succiniciproducens (strain KCTC 0769BP / MBEL55E).